Consider the following 363-residue polypeptide: Probable L-tyrosine/L-aspartate decarboxylase (363 aa).

Lys-208 bears the N6-(pyridoxal phosphate)lysine mark.

It belongs to the group II decarboxylase family. MfnA subfamily. Pyridoxal 5'-phosphate is required as a cofactor.

It catalyses the reaction L-tyrosine + H(+) = tyramine + CO2. It carries out the reaction L-aspartate + H(+) = beta-alanine + CO2. The protein operates within cofactor biosynthesis; methanofuran biosynthesis. Its pathway is cofactor biosynthesis; coenzyme A biosynthesis. Catalyzes the decarboxylation of L-tyrosine to produce tyramine for methanofuran biosynthesis. Can also catalyze the decarboxylation of L-aspartate to produce beta-alanine for coenzyme A (CoA) biosynthesis. This chain is Probable L-tyrosine/L-aspartate decarboxylase, found in Methanothermobacter thermautotrophicus (strain ATCC 29096 / DSM 1053 / JCM 10044 / NBRC 100330 / Delta H) (Methanobacterium thermoautotrophicum).